Consider the following 326-residue polypeptide: 3-methyl-2-oxobutanoate hydroxymethyltransferase 1 (326 aa).

Mg(2+)-binding residues include aspartate 52, aspartate 91, and glutamate 122. Residues 52 to 53 (DS) and aspartate 91 each bind 3-methyl-2-oxobutanoate. The active-site Proton acceptor is glutamate 189.

Belongs to the PanB family. As to quaternary structure, homodecamer; pentamer of dimers. Requires Mg(2+) as cofactor.

The protein localises to the cytoplasm. The catalysed reaction is 3-methyl-2-oxobutanoate + (6R)-5,10-methylene-5,6,7,8-tetrahydrofolate + H2O = 2-dehydropantoate + (6S)-5,6,7,8-tetrahydrofolate. It functions in the pathway cofactor biosynthesis; (R)-pantothenate biosynthesis; (R)-pantoate from 3-methyl-2-oxobutanoate: step 1/2. Its function is as follows. Catalyzes the reversible reaction in which hydroxymethyl group from 5,10-methylenetetrahydrofolate is transferred onto alpha-ketoisovalerate to form ketopantoate. The protein is 3-methyl-2-oxobutanoate hydroxymethyltransferase 1 of Bradyrhizobium diazoefficiens (strain JCM 10833 / BCRC 13528 / IAM 13628 / NBRC 14792 / USDA 110).